Consider the following 277-residue polypeptide: MSDTPIRTVFFISDGTGITAETLGHSLLAQFPGARFRQVRVPFVDDLDKALDCARQIRETAVTDGVRPIVFSTLVNPDPLSGLREIDALFVDLFEQFINPLEAELGQRSTHTVGRFHGIAESSDYKARIEAINFAMAHDDGVSTDGELADADVILVGVSRSGKTPTSLYLAVQFGVKAANYPLIPEDFERNKLPGELHRHRSKLFGLTIAPERLSQIRQERRPNSRYASIENCRFEIDAAQKLMRRENIQWLDSTSKSIEEISATILQAVRLNRPVY.

Position 157–164 (157–164 (GVSRSGKT)) interacts with ADP.

It belongs to the pyruvate, phosphate/water dikinase regulatory protein family. PSRP subfamily.

It catalyses the reaction [pyruvate, water dikinase] + ADP = [pyruvate, water dikinase]-phosphate + AMP + H(+). The catalysed reaction is [pyruvate, water dikinase]-phosphate + phosphate + H(+) = [pyruvate, water dikinase] + diphosphate. Its function is as follows. Bifunctional serine/threonine kinase and phosphorylase involved in the regulation of the phosphoenolpyruvate synthase (PEPS) by catalyzing its phosphorylation/dephosphorylation. This Aromatoleum aromaticum (strain DSM 19018 / LMG 30748 / EbN1) (Azoarcus sp. (strain EbN1)) protein is Putative phosphoenolpyruvate synthase regulatory protein.